The chain runs to 158 residues: Regulator of sigma D (158 aa).

The protein belongs to the Rsd/AlgQ family. In terms of assembly, interacts with RpoD.

It is found in the cytoplasm. Its function is as follows. Binds RpoD and negatively regulates RpoD-mediated transcription activation by preventing the interaction between the primary sigma factor RpoD with the catalytic core of the RNA polymerase and with promoter DNA. May be involved in replacement of the RNA polymerase sigma subunit from RpoD to RpoS during the transition from exponential growth to the stationary phase. The chain is Regulator of sigma D from Escherichia coli (strain SMS-3-5 / SECEC).